We begin with the raw amino-acid sequence, 417 residues long: Pre-mRNA-splicing factor RBM22 (417 aa).

Residues 159–186 form a C3H1-type zinc finger; it reads RNRPHICSFWVKGECKRGEECPYRHEKP. The region spanning 232-305 is the RRM domain; that stretch reads TTLYVGGLGD…RRLNVKWGRS (74 aa). Disordered stretches follow at residues 303-348 and 369-417; these read GRSQ…SANY and GLSG…PSSG. The span at 309-318 shows a compositional bias: basic and acidic residues; it reads RGKEREHDGS. A compositionally biased stretch (pro residues) spans 369–391; the sequence is GLSGPPPGFGPHMFPPMAPPPFL.

The protein belongs to the SLT11 family. Component of the pre-catalytic and catalytic spliceosome complexes. Component of the postcatalytic spliceosome P complex.

Its subcellular location is the nucleus. It is found in the cytoplasm. In terms of biological role, required for pre-mRNA splicing as component of the activated spliceosome. Involved in the first step of pre-mRNA splicing. Binds directly to the internal stem-loop (ISL) domain of the U6 snRNA and to the pre-mRNA intron near the 5' splice site during the activation and catalytic phases of the spliceosome cycle. In Xenopus laevis (African clawed frog), this protein is Pre-mRNA-splicing factor RBM22 (rbm22).